Here is a 271-residue protein sequence, read N- to C-terminus: Shikimate dehydrogenase (NADP(+)) (271 aa).

Residues 14 to 16 and Thr-61 each bind shikimate; that span reads SLS. The active-site Proton acceptor is Lys-65. 2 residues coordinate shikimate: Asn-86 and Asp-101. NADP(+)-binding positions include 125–129 and Ile-212; that span reads GAGGA. Tyr-214 contacts shikimate. Gly-235 is a binding site for NADP(+).

The protein belongs to the shikimate dehydrogenase family. As to quaternary structure, homodimer.

The enzyme catalyses shikimate + NADP(+) = 3-dehydroshikimate + NADPH + H(+). It functions in the pathway metabolic intermediate biosynthesis; chorismate biosynthesis; chorismate from D-erythrose 4-phosphate and phosphoenolpyruvate: step 4/7. Involved in the biosynthesis of the chorismate, which leads to the biosynthesis of aromatic amino acids. Catalyzes the reversible NADPH linked reduction of 3-dehydroshikimate (DHSA) to yield shikimate (SA). The sequence is that of Shikimate dehydrogenase (NADP(+)) from Clostridium perfringens (strain ATCC 13124 / DSM 756 / JCM 1290 / NCIMB 6125 / NCTC 8237 / Type A).